The chain runs to 185 residues: Putative sulfur carrier protein YrkF (185 aa).

Cys15 acts as the Cysteine persulfide intermediate in catalysis. Positions Ser101–Glu185 constitute a Rhodanese domain.

It belongs to the sulfur carrier protein TusA family.

This chain is Putative sulfur carrier protein YrkF (yrkF), found in Bacillus subtilis (strain 168).